A 651-amino-acid polypeptide reads, in one-letter code: Choline transporter-like protein 1 (651 aa).

The Cytoplasmic segment spans residues 1–25 (MGCCGSTQNSKRDWRPLEEHSCTDI). A helical membrane pass occupies residues 26 to 46 (PWLLLFILFCVGMGFICGFSI). Over 47 to 208 (ATGAASRLVF…RLISGVMTSK (162 aa)) the chain is Extracellular. N131 and N176 each carry an N-linked (GlcNAc...) asparagine glycan. Residues 209–229 (EIIMGLCLLSLVLSMILMVII) traverse the membrane as a helical segment. At 230–234 (RYISR) the chain is on the cytoplasmic side. A helical membrane pass occupies residues 235–255 (VLVWIITILVVLGSLGGTGVL). Topologically, residues 256–284 (WWLYADNKKSLNENLPPDQLQVSKDNLQA) are extracellular. A helical transmembrane segment spans residues 285 to 305 (LLVYAIAATVFTVILLLMMLI). The Cytoplasmic portion of the chain corresponds to 306 to 311 (MRKRVA). Residues 312 to 332 (LTIALFNVAGKVFIHLPLLVF) form a helical membrane-spanning segment. The Extracellular segment spans residues 333 to 334 (QP). The helical transmembrane segment at 335 to 355 (FWTFFALLLFWVYWVMVLLFL) threads the bilayer. The Cytoplasmic portion of the chain corresponds to 356-376 (GTAGDPFTNEQGFVEFRINGP). Residues 377 to 397 (LQYMWWYHLVGLIWISEFILA) form a helical membrane-spanning segment. At 398 to 438 (CQQMTIAGAVVTYYFTRNKNDLPFTPILASVNRLIRYHLGT) the chain is on the extracellular side. The chain crosses the membrane as a helical span at residues 439 to 459 (VAKGAFIITLVKIPRMILMYI). Residues 460–533 (HSQLKGKENA…RVAAINTVGD (74 aa)) lie on the Cytoplasmic side of the membrane. Residues 534–554 (FMLFLGKILIVSCTGLAGIML) form a helical membrane-spanning segment. Residues 555–562 (LNYQRDYT) are Extracellular-facing. Residues 563-583 (VWVLPLIIVCLFAFLVAHCFL) traverse the membrane as a helical segment. Topologically, residues 584-651 (SIYEMVVDVL…KPMASGTSTA (68 aa)) are cytoplasmic. The disordered stretch occupies residues 629–651 (LKEPGSTAEGRELKPMASGTSTA).

It belongs to the CTL (choline transporter-like) family.

It localises to the cell membrane. Its subcellular location is the mitochondrion outer membrane. It carries out the reaction choline(out) + n H(+)(in) = choline(in) + n H(+)(out). The enzyme catalyses ethanolamine(out) + n H(+)(in) = ethanolamine(in) + n H(+)(out). Its function is as follows. Choline/H+ antiporter. Also acts as a high-affinity ethanolamine/H+ antiporter, regulating the supply of extracellular ethanolamine (Etn) for the CDP-Etn pathway, redistribute intracellular Etn and balance the CDP-Cho and CDP-Etn arms of the Kennedy pathway. Involved in membrane synthesis and myelin production. The polypeptide is Choline transporter-like protein 1 (slc44a1) (Xenopus laevis (African clawed frog)).